We begin with the raw amino-acid sequence, 302 residues long: CRISPR-associated endonuclease Cas1 1 (302 aa).

Glu-159, His-219, and Glu-234 together coordinate Mn(2+).

Belongs to the CRISPR-associated endonuclease Cas1 family. In terms of assembly, homodimer, forms a heterotetramer with a Cas2 homodimer. It depends on Mg(2+) as a cofactor. Requires Mn(2+) as cofactor.

In terms of biological role, CRISPR (clustered regularly interspaced short palindromic repeat), is an adaptive immune system that provides protection against mobile genetic elements (viruses, transposable elements and conjugative plasmids). CRISPR clusters contain spacers, sequences complementary to antecedent mobile elements, and target invading nucleic acids. CRISPR clusters are transcribed and processed into CRISPR RNA (crRNA). Acts as a dsDNA endonuclease. Involved in the integration of spacer DNA into the CRISPR cassette. This is CRISPR-associated endonuclease Cas1 1 from Pyrobaculum aerophilum (strain ATCC 51768 / DSM 7523 / JCM 9630 / CIP 104966 / NBRC 100827 / IM2).